Here is a 1154-residue protein sequence, read N- to C-terminus: Nitric oxide synthase, inducible (1154 aa).

The interval 22–58 is disordered; it reads KDINNNVEKPPGATPSPSTQDDLKNHKHHNDSPQPLT. The DINNN-motif; mediates interaction with SPSB1, SPSB2 and SPSB4 signature appears at 23 to 27; it reads DINNN. 2 residues coordinate Zn(2+): Cys107 and Cys112. Cys197 is a binding site for heme b. L-arginine-binding residues include Gln260, Trp369, Tyr370, and Glu374. 4 residues coordinate (6R)-L-erythro-5,6,7,8-tetrahydrobiopterin: Arg378, Ile459, Trp460, and Phe473. Residue Tyr488 coordinates heme b. A calmodulin-binding region spans residues 512-532; sequence LKVLVKAVLFASMLMRKTMAS. The Flavodoxin-like domain occupies 536–674; sequence VTILFATETG…AFRCWAVQTF (139 aa). 5 residues coordinate FMN: Thr542, Glu543, Thr544, Lys546, and Ser547. A Phosphotyrosine modification is found at Tyr572. Ser588, Thr589, Ser625, Cys632, and Glu658 together coordinate FMN. An FAD-binding FR-type domain is found at 727–967; it reads KNVFTLRLKS…VRSAGNFKLP (241 aa). Arg747 contributes to the NADP(+) binding site. 10 residues coordinate FAD: His769, Arg903, Tyr905, Ser906, Thr921, Ala923, Tyr927, Val940, Cys941, and Ser942. Positions 981, 1014, 1043, 1044, 1050, 1052, 1054, and 1087 each coordinate NADP(+).

Belongs to the NOS family. In terms of assembly, homodimer. Interacts with NHERF1. Interacts with GAPDH; induced by oxidatively-modified low-densitity lipoprotein (LDL(ox)). Interacts with S100A8 and S100A9 to form the iNOS-S100A8/9 transnitrosylase complex. Interacts with SPSB1, SPSB2 and SPSB4. Interacts with ELOC and CUL5 in the presence of SPSB1 or SPSB2 or SPSB4. Forms a complex with ASL, ASS1 and HSP90AA1; the complex regulates cell-autonomous L-arginine synthesis and citrulline recycling while channeling extracellular L-arginine to nitric oxide synthesis pathway. Heme b is required as a cofactor. It depends on FAD as a cofactor. FMN serves as cofactor. Requires (6R)-L-erythro-5,6,7,8-tetrahydrobiopterin as cofactor. Polyubiquitinated; mediated by SPSB1, SPSB2 and SPSB4, leading to proteasomal degradation.

Its subcellular location is the cytoplasm. It is found in the cytosol. It catalyses the reaction 2 L-arginine + 3 NADPH + 4 O2 + H(+) = 2 L-citrulline + 2 nitric oxide + 3 NADP(+) + 4 H2O. Regulated by calcium/calmodulin. In terms of biological role, produces nitric oxide (NO) which is a messenger molecule with diverse functions throughout the body. In macrophages, NO mediates tumoricidal and bactericidal actions. Also has nitrosylase activity and mediates cysteine S-nitrosylation of cytoplasmic target proteins such PTGS2/COX2. As component of the iNOS-S100A8/9 transnitrosylase complex involved in the selective inflammatory stimulus-dependent S-nitrosylation of GAPDH implicated in regulation of the GAIT complex activity and probably multiple targets including ANXA5, EZR, MSN and VIM. Involved in inflammation, enhances the synthesis of pro-inflammatory mediators such as IL6 and IL8. The sequence is that of Nitric oxide synthase, inducible (NOS2) from Canis lupus familiaris (Dog).